A 133-amino-acid polypeptide reads, in one-letter code: Holo-[acyl-carrier-protein] synthase (133 aa).

Residues Asp8 and Glu56 each contribute to the Mg(2+) site.

This sequence belongs to the P-Pant transferase superfamily. AcpS family. Mg(2+) serves as cofactor.

The protein resides in the cytoplasm. The catalysed reaction is apo-[ACP] + CoA = holo-[ACP] + adenosine 3',5'-bisphosphate + H(+). Its function is as follows. Transfers the 4'-phosphopantetheine moiety from coenzyme A to a Ser of acyl-carrier-protein. This Clostridium perfringens (strain 13 / Type A) protein is Holo-[acyl-carrier-protein] synthase.